Reading from the N-terminus, the 434-residue chain is Trigger factor (434 aa).

Positions Gly160–Pro245 constitute a PPIase FKBP-type domain.

This sequence belongs to the FKBP-type PPIase family. Tig subfamily.

The protein resides in the cytoplasm. The catalysed reaction is [protein]-peptidylproline (omega=180) = [protein]-peptidylproline (omega=0). In terms of biological role, involved in protein export. Acts as a chaperone by maintaining the newly synthesized protein in an open conformation. Functions as a peptidyl-prolyl cis-trans isomerase. The polypeptide is Trigger factor (Shewanella woodyi (strain ATCC 51908 / MS32)).